A 318-amino-acid polypeptide reads, in one-letter code: Putative 2-hydroxyacid dehydrogenase SH0752 (318 aa).

Residues Glu-155–Ile-156, Ala-234–Arg-236, and Asp-260 each bind NAD(+). Arg-236 is an active-site residue. The active site involves Glu-265. His-283 (proton donor) is an active-site residue. His-283–Asn-286 is a binding site for NAD(+).

The protein belongs to the D-isomer specific 2-hydroxyacid dehydrogenase family.

The chain is Putative 2-hydroxyacid dehydrogenase SH0752 from Staphylococcus haemolyticus (strain JCSC1435).